Reading from the N-terminus, the 321-residue chain is Lipoyl synthase (321 aa).

[4Fe-4S] cluster-binding residues include C68, C73, C79, C94, C98, C101, and S308. Residues 80–297 (FNHGTATFMI…KAEAIAMGFT (218 aa)) form the Radical SAM core domain.

This sequence belongs to the radical SAM superfamily. Lipoyl synthase family. Requires [4Fe-4S] cluster as cofactor.

It is found in the cytoplasm. The enzyme catalyses [[Fe-S] cluster scaffold protein carrying a second [4Fe-4S](2+) cluster] + N(6)-octanoyl-L-lysyl-[protein] + 2 oxidized [2Fe-2S]-[ferredoxin] + 2 S-adenosyl-L-methionine + 4 H(+) = [[Fe-S] cluster scaffold protein] + N(6)-[(R)-dihydrolipoyl]-L-lysyl-[protein] + 4 Fe(3+) + 2 hydrogen sulfide + 2 5'-deoxyadenosine + 2 L-methionine + 2 reduced [2Fe-2S]-[ferredoxin]. Its pathway is protein modification; protein lipoylation via endogenous pathway; protein N(6)-(lipoyl)lysine from octanoyl-[acyl-carrier-protein]: step 2/2. In terms of biological role, catalyzes the radical-mediated insertion of two sulfur atoms into the C-6 and C-8 positions of the octanoyl moiety bound to the lipoyl domains of lipoate-dependent enzymes, thereby converting the octanoylated domains into lipoylated derivatives. In Pectobacterium carotovorum subsp. carotovorum (strain PC1), this protein is Lipoyl synthase.